Consider the following 398-residue polypeptide: Lysophosphatidylserine lipase ABHD12 (398 aa).

Basic and acidic residues predominate over residues 1 to 15 (MRKRTEPVTLEHERC). Residues 1-24 (MRKRTEPVTLEHERCAASGSSSSG) are disordered. Over 1 to 74 (MRKRTEPVTL…RKSLWFRLRK (74 aa)) the chain is Cytoplasmic. The helical transmembrane segment at 75 to 95 (ILLCVLGFYIAIPFLVKLCPG) threads the bilayer. Topologically, residues 96–398 (IQAKLIFLNF…LGKSEPERQH (303 aa)) are extracellular. Asn123 is a glycosylation site (N-linked (GlcNAc...) asparagine). Catalysis depends on Ser246, which acts as the Nucleophile. Active-site charge relay system residues include Asp333 and His372.

The protein belongs to the serine esterase family.

It localises to the endoplasmic reticulum membrane. The catalysed reaction is 1-(9Z-octadecenoyl)-sn-glycero-3-phospho-L-serine + H2O = sn-glycero-3-phospho-L-serine + (9Z)-octadecenoate + H(+). The enzyme catalyses 1-(9Z-octadecenoyl)-sn-glycero-3-phospho-(1'-sn-glycerol) + H2O = sn-glycero-3-phospho-(1'-sn-glycerol) + (9Z)-octadecenoate + H(+). It carries out the reaction 1-(9Z-octadecenoyl)-sn-glycero-3-phospho-(1D-myo-inositol) + H2O = sn-glycero-3-phospho-1D-myo-inositol + (9Z)-octadecenoate + H(+). It catalyses the reaction 1-(9Z-octadecenoyl)-sn-glycero-3-phosphoethanolamine + H2O = sn-glycero-3-phosphoethanolamine + (9Z)-octadecenoate + H(+). The catalysed reaction is 1-(9Z-octadecenoyl)-sn-glycero-3-phosphocholine + H2O = 1-(9Z-octadecenoyl)-sn-glycerol + phosphocholine + H(+). The enzyme catalyses 2-(9Z-octadecenoyl)-glycerol + H2O = glycerol + (9Z)-octadecenoate + H(+). It carries out the reaction 1-hexadecanoyl-sn-glycero-3-phospho-L-serine + H2O = sn-glycero-3-phospho-L-serine + hexadecanoate + H(+). It catalyses the reaction 2-(5Z,8Z,11Z,14Z-eicosatetraenoyl)-glycerol + H2O = glycerol + (5Z,8Z,11Z,14Z)-eicosatetraenoate + H(+). The catalysed reaction is Hydrolyzes glycerol monoesters of long-chain fatty acids.. The enzyme catalyses 1-decanoylglycerol + H2O = decanoate + glycerol + H(+). It carries out the reaction 1-dodecanoylglycerol + H2O = dodecanoate + glycerol + H(+). It catalyses the reaction 1-tetradecanoylglycerol + H2O = tetradecanoate + glycerol + H(+). The catalysed reaction is 2-hexadecanoylglycerol + H2O = glycerol + hexadecanoate + H(+). The enzyme catalyses 1-(9Z-octadecenoyl)-glycerol + H2O = glycerol + (9Z)-octadecenoate + H(+). It carries out the reaction 2-(9Z,12Z-octadecadienoyl)-glycerol + H2O = (9Z,12Z)-octadecadienoate + glycerol + H(+). It catalyses the reaction 1-(5Z,8Z,11Z,14Z-eicosatetraenoyl)-glycerol + H2O = glycerol + (5Z,8Z,11Z,14Z)-eicosatetraenoate + H(+). The catalysed reaction is 1-(9Z,12Z-octadecadienoyl)-glycerol + H2O = (9Z,12Z)-octadecadienoate + glycerol + H(+). The enzyme catalyses 1-hexadecanoylglycerol + H2O = glycerol + hexadecanoate + H(+). It carries out the reaction 1-octadecanoylglycerol + H2O = octadecanoate + glycerol + H(+). It catalyses the reaction 1-octadecanoyl-2-(9,10-epoxyoctadecanoyl)-sn-glycero-3-phospho-L-serine + H2O = 9,10-epoxyoctadecanoate + 1-octadecanoyl-sn-glycero-3-phosphoserine + H(+). The catalysed reaction is 1-octadecanoyl-2-(10-hydroxyoctadecanoyl)-sn-glycero-3-phospho-L-serine + H2O = 1-octadecanoyl-sn-glycero-3-phosphoserine + 10-hydroxyoctadecanoate + H(+). The enzyme catalyses 1-hexadecanoyl-2-(10-hydroxyoctadecanoyl)-sn-glycero-3-phospho-L-serine + H2O = 10-hydroxyoctadecanoate + 1-hexadecanoyl-sn-glycero-3-phospho-L-serine + H(+). In terms of biological role, lysophosphatidylserine (LPS) lipase that mediates the hydrolysis of lysophosphatidylserine, a class of signaling lipids that regulates immunological and neurological processes. Represents a major lysophosphatidylserine lipase in the brain, thereby playing a key role in the central nervous system. Also able to hydrolyze oxidized phosphatidylserine; oxidized phosphatidylserine is produced in response to severe inflammatory stress and constitutes a proapoptotic 'eat me' signal. Also has monoacylglycerol (MAG) lipase activity: hydrolyzes 2-arachidonoylglycerol (2-AG), thereby acting as a regulator of endocannabinoid signaling pathways. Has a strong preference for very-long-chain lipid substrates; substrate specificity is likely due to improved catalysis and not improved substrate binding. The polypeptide is Lysophosphatidylserine lipase ABHD12 (Rattus norvegicus (Rat)).